Consider the following 139-residue polypeptide: Transcription antitermination protein NusB (139 aa).

This sequence belongs to the NusB family.

Involved in transcription antitermination. Required for transcription of ribosomal RNA (rRNA) genes. Binds specifically to the boxA antiterminator sequence of the ribosomal RNA (rrn) operons. In Natranaerobius thermophilus (strain ATCC BAA-1301 / DSM 18059 / JW/NM-WN-LF), this protein is Transcription antitermination protein NusB.